The primary structure comprises 179 residues: HTH-type transcriptional regulator AldR (179 aa).

In terms of domain architecture, HTH asnC-type spans 32-93; the sequence is LDEVDRRILS…DIDPVAVGLP (62 aa). Positions 51-70 form a DNA-binding region, H-T-H motif; sequence NNALADTVGIAPSTCHGRVR.

Homooctamer. Homotetramer. Tetramer of dimers. The N-terminal DNA-binding domains are swapped, forming a dimer, and four dimers are assembled into an octamer through crystal symmetry.

With respect to regulation, the DNA-binding activity of AldR is modulated by interaction of AldR with various amino acids. Alanine, tryptophan, tyrosine and aspartate completely abolish the DNA binding ability of AldR. On the other hand, glutamate and asparagine reduce AldR binding to DNA but do not completely abolish it. Binding of amino acids can lead to structural modifications and changes in oligomeric association. Activity is also inhibited by 3 small molecule inhibitors, tetrahydroquinoline carbonitrile derivative (S010-0261), levothyroxine and liothyronine, which can disrupt the AldR-DNA complex. Transcriptional regulator that might play a role under hypoxic conditions. Regulates the expression of ald, which encodes L-alanine dehydrogenase. Serves as both an activator for ald expression in the presence of L-alanine and a repressor in the absence of L-alanine. Acts by binding directly to the upstream region of the ald gene. Four AldR-binding sites (O2, O1, O4 and O3) were identified upstream of the ald gene. O2, O1 and O4 are required for the induction of ald expression by alanine, while O3 is directly involved in the repression of ald expression, by occluding the access of RNA polymerase to the ald promoter. In addition to O3, both O1 and O4 are also necessary for full repression of ald expression in the absence of alanine. The chain is HTH-type transcriptional regulator AldR from Mycobacterium tuberculosis (strain ATCC 25618 / H37Rv).